The sequence spans 236 residues: Phosphoribosylformylglycinamidine synthase subunit PurQ (236 aa).

The 232-residue stretch at 3–234 folds into the Glutamine amidotransferase type-1 domain; it reads FGVIVFPGSN…VDWWERGERL (232 aa). Cys86 acts as the Nucleophile in catalysis. Active-site residues include His203 and Glu205.

Part of the FGAM synthase complex composed of 1 PurL, 1 PurQ and 2 PurS subunits.

It localises to the cytoplasm. The enzyme catalyses N(2)-formyl-N(1)-(5-phospho-beta-D-ribosyl)glycinamide + L-glutamine + ATP + H2O = 2-formamido-N(1)-(5-O-phospho-beta-D-ribosyl)acetamidine + L-glutamate + ADP + phosphate + H(+). It catalyses the reaction L-glutamine + H2O = L-glutamate + NH4(+). The protein operates within purine metabolism; IMP biosynthesis via de novo pathway; 5-amino-1-(5-phospho-D-ribosyl)imidazole from N(2)-formyl-N(1)-(5-phospho-D-ribosyl)glycinamide: step 1/2. In terms of biological role, part of the phosphoribosylformylglycinamidine synthase complex involved in the purines biosynthetic pathway. Catalyzes the ATP-dependent conversion of formylglycinamide ribonucleotide (FGAR) and glutamine to yield formylglycinamidine ribonucleotide (FGAM) and glutamate. The FGAM synthase complex is composed of three subunits. PurQ produces an ammonia molecule by converting glutamine to glutamate. PurL transfers the ammonia molecule to FGAR to form FGAM in an ATP-dependent manner. PurS interacts with PurQ and PurL and is thought to assist in the transfer of the ammonia molecule from PurQ to PurL. The sequence is that of Phosphoribosylformylglycinamidine synthase subunit PurQ from Moorella thermoacetica (strain ATCC 39073 / JCM 9320).